The primary structure comprises 882 residues: DNA mismatch repair protein MutS (882 aa).

629–636 is a binding site for ATP; sequence GPNMGGKS.

Belongs to the DNA mismatch repair MutS family.

This protein is involved in the repair of mismatches in DNA. It is possible that it carries out the mismatch recognition step. This protein has a weak ATPase activity. This Ralstonia nicotianae (strain ATCC BAA-1114 / GMI1000) (Ralstonia solanacearum) protein is DNA mismatch repair protein MutS.